The sequence spans 166 residues: MDSGIYETPINYKKSNVSAVSVNNTIFVTGGLFINNSNSTIVVNNMEKLDIYKDKQWSIIEMPMARVYHGIDSTFGMLYFAGGLSVTEQYGNLEKNNEISCYNPRTNKWFDISYTIYKISISSLCKLNNVFYVFSKDIGYVEKYDGAWKLVHDRLPAIKALSTSPY.

Kelch repeat units follow at residues 25–76 (TIFV…STFG) and 77–129 (MLYF…KLNN).

It belongs to the poxviruses Kelch family.

In Oryctolagus cuniculus (Rabbit), this protein is Kelch repeat protein B10.